Reading from the N-terminus, the 343-residue chain is Biotin synthase (343 aa).

Positions 36–254 constitute a Radical SAM core domain; sequence NTIQISTLLS…IAVARIMMPK (219 aa). The [4Fe-4S] cluster site is built by C51, C55, and C58. [2Fe-2S] cluster contacts are provided by C95, C126, C186, and R258.

It belongs to the radical SAM superfamily. Biotin synthase family. As to quaternary structure, homodimer. The cofactor is [4Fe-4S] cluster. Requires [2Fe-2S] cluster as cofactor.

The enzyme catalyses (4R,5S)-dethiobiotin + (sulfur carrier)-SH + 2 reduced [2Fe-2S]-[ferredoxin] + 2 S-adenosyl-L-methionine = (sulfur carrier)-H + biotin + 2 5'-deoxyadenosine + 2 L-methionine + 2 oxidized [2Fe-2S]-[ferredoxin]. The protein operates within cofactor biosynthesis; biotin biosynthesis; biotin from 7,8-diaminononanoate: step 2/2. Its function is as follows. Catalyzes the conversion of dethiobiotin (DTB) to biotin by the insertion of a sulfur atom into dethiobiotin via a radical-based mechanism. This is Biotin synthase from Buchnera aphidicola subsp. Acyrthosiphon pisum (strain 5A).